Consider the following 326-residue polypeptide: uncharacterized protein (326 aa).

The next 2 membrane-spanning stretches (helical) occupy residues Trp-9–Leu-29 and Ile-33–Tyr-53. Asp-120, Asn-148, Tyr-214, Lys-218, and Thr-252 together coordinate NADP(+). The Proton acceptor role is filled by Tyr-214. Lys-218 acts as the Lowers pKa of active site Tyr in catalysis.

The protein belongs to the short-chain dehydrogenases/reductases (SDR) family.

It localises to the mitochondrion membrane. Its function is as follows. Involved in the resistance to DNA-damaging agents. This is an uncharacterized protein from Saccharomyces cerevisiae (strain ATCC 204508 / S288c) (Baker's yeast).